Consider the following 316-residue polypeptide: MRSPVPRFRDVERQASGLQPPQCLPSCHERQSSMWFIKDACGIVCAIITWFLVFFAEFVVLFVMLIPSKNLTYSLVNGTLFNSLAFLALASHFRAMCTDPGAVPKGNATKEYIESLQLKPGQVVYKCPKCCSIKPDRAHHCSVCKRCIRKMDHHCPWVNNCVGENNQKYFVLFTMYICLISLHSLVMVVFHFLNCFEDDWTKCSTFSPPATVILLILLCFEGLLFLIFTSVMFGTQVHSICTDETGIEKLKREDPTWEKTQCWEGMKSAFGGPLSVTWFSPFTDLSCQKDDSSPVPMFPQGEIIEEDVIEIPLEPH.

Residues 1-45 (MRSPVPRFRDVERQASGLQPPQCLPSCHERQSSMWFIKDACGIVC) are Cytoplasmic-facing. Residues 46-66 (AIITWFLVFFAEFVVLFVMLI) form a helical membrane-spanning segment. Residues 67–70 (PSKN) are Lumenal-facing. The chain crosses the membrane as a helical span at residues 71–91 (LTYSLVNGTLFNSLAFLALAS). Residues 92–169 (HFRAMCTDPG…NCVGENNQKY (78 aa)) lie on the Cytoplasmic side of the membrane. A DHHC domain is found at 124-175 (VYKCPKCCSIKPDRAHHCSVCKRCIRKMDHHCPWVNNCVGENNQKYFVLFTM). C144 is lipidated: S-palmitoyl cysteine. C155 acts as the S-palmitoyl cysteine intermediate in catalysis. Residues 170–190 (FVLFTMYICLISLHSLVMVVF) traverse the membrane as a helical segment. Residues 191–212 (HFLNCFEDDWTKCSTFSPPATV) lie on the Lumenal side of the membrane. Residues 213–233 (ILLILLCFEGLLFLIFTSVMF) traverse the membrane as a helical segment. Residues 234-316 (GTQVHSICTD…DVIEIPLEPH (83 aa)) lie on the Cytoplasmic side of the membrane.

This sequence belongs to the DHHC palmitoyltransferase family. Monomer. Homooligomers. The monomeric form has a higher catalytic activity. Forms heterooligomers with zdhhc7. Post-translationally, autopalmitoylated.

It localises to the golgi apparatus membrane. It carries out the reaction L-cysteinyl-[protein] + hexadecanoyl-CoA = S-hexadecanoyl-L-cysteinyl-[protein] + CoA. The catalysed reaction is L-cysteinyl-[protein] + tetradecanoyl-CoA = S-tetradecanoyl-L-cysteinyl-[protein] + CoA. It catalyses the reaction L-cysteinyl-[protein] + octadecanoyl-CoA = S-octadecanoyl-L-cysteinyl-[protein] + CoA. Functionally, golgi-localized palmitoyltransferase that catalyzes the addition of palmitate onto various protein substrates and regulates their association with membranes. Has no stringent fatty acid selectivity and in addition to palmitate can also transfer onto target proteins myristate from tetradecanoyl-CoA and stearate from octadecanoyl-CoA. The chain is Palmitoyltransferase ZDHHC3-A (zdhhc3a) from Danio rerio (Zebrafish).